Reading from the N-terminus, the 140-residue chain is uncharacterized protein (140 aa).

Positions 1–19 (MGLCGSKTQPMPSQTTTVA) are enriched in polar residues. Positions 1–140 (MGLCGSKTQP…ERERENMIYD (140 aa)) are disordered. Residue G2 is the site of N-myristoyl glycine attachment. The S-palmitoyl cysteine moiety is linked to residue C4. Residues 27–40 (INRDTVKSKQELRH) show a composition bias toward basic and acidic residues. Positions 41-51 (KEKKDKKKKTQ) are enriched in basic residues. Residues 73–140 (DPSKNKVSPK…ERERENMIYD (68 aa)) show a composition bias toward basic and acidic residues.

This sequence to S.pombe new13. In terms of processing, myristoylated. Post-translationally, the N-myristoylated protein is further palmitoylated by ERF2, PFA4 and slightly by PFA5, but not by PFA3.

Its subcellular location is the cytoplasm. It localises to the cytosol. This is an uncharacterized protein from Saccharomyces cerevisiae (strain ATCC 204508 / S288c) (Baker's yeast).